The following is a 317-amino-acid chain: Ribosomal protein L11 methyltransferase (317 aa).

Thr158, Gly179, Asp201, and Asn244 together coordinate S-adenosyl-L-methionine.

The protein belongs to the methyltransferase superfamily. PrmA family.

The protein localises to the cytoplasm. The enzyme catalyses L-lysyl-[protein] + 3 S-adenosyl-L-methionine = N(6),N(6),N(6)-trimethyl-L-lysyl-[protein] + 3 S-adenosyl-L-homocysteine + 3 H(+). Its function is as follows. Methylates ribosomal protein L11. In Streptococcus pyogenes serotype M28 (strain MGAS6180), this protein is Ribosomal protein L11 methyltransferase.